Reading from the N-terminus, the 37-residue chain is L-amino-acid oxidase (37 aa).

It belongs to the flavin monoamine oxidase family. FIG1 subfamily. Homodimer; non-covalently linked. The cofactor is FAD. N-Glycosylated. As to expression, expressed by the venom gland.

It localises to the secreted. It carries out the reaction an L-alpha-amino acid + O2 + H2O = a 2-oxocarboxylate + H2O2 + NH4(+). It catalyses the reaction L-leucine + O2 + H2O = 4-methyl-2-oxopentanoate + H2O2 + NH4(+). The enzyme catalyses L-phenylalanine + O2 + H2O = 3-phenylpyruvate + H2O2 + NH4(+). The catalysed reaction is L-tryptophan + O2 + H2O = indole-3-pyruvate + H2O2 + NH4(+). It carries out the reaction L-methionine + O2 + H2O = 4-methylsulfanyl-2-oxobutanoate + H2O2 + NH4(+). It catalyses the reaction L-isoleucine + O2 + H2O = (S)-3-methyl-2-oxopentanoate + H2O2 + NH4(+). The enzyme catalyses L-arginine + O2 + H2O = 5-guanidino-2-oxopentanoate + H2O2 + NH4(+). The catalysed reaction is L-histidine + O2 + H2O = 3-(imidazol-5-yl)pyruvate + H2O2 + NH4(+). It carries out the reaction L-valine + O2 + H2O = 3-methyl-2-oxobutanoate + H2O2 + NH4(+). Functionally, catalyzes an oxidative deamination of predominantly hydrophobic and aromatic L-amino acids, thus producing hydrogen peroxide that may contribute to the diverse toxic effects of this enzyme. Is highly active on L-Leu, L-Met, moderately active on L-Arg, L-Trp, L-Phe, L-Val, L-His, and L-Ile, and is weakly or not active on L-Cys, L-Lys, L-Ala, L-Thr, L-Asp, L-Ser, and L-Pro. Exhibits diverse biological activities, such as hemorrhage, edema, apoptosis of vascular endothelial cells or tumor cell lines, as well as regulation of platelet aggregation. Effects of snake L-amino oxidases on platelets are controversial, since they either induce aggregation or inhibit agonist-induced aggregation. These different effects are probably due to different experimental conditions. This protein induce hemolysis and has antibacterial and antiparasitic activities (against the Gram-positive S.aureus). Tested in vivo, this protein significantly inhibits Ehrlich ascite tumors growth and induces an influx of polymorphonuclear cells, as well as spontaneous liberation of hydrogen peroxide from peritoneal macrophages. In Bothrops jararaca (Jararaca), this protein is L-amino-acid oxidase.